The primary structure comprises 98 residues: uncharacterized protein (98 aa).

It localises to the cytoplasm. This is an uncharacterized protein from Saccharomyces cerevisiae (strain ATCC 204508 / S288c) (Baker's yeast).